We begin with the raw amino-acid sequence, 191 residues long: Ribosomal RNA small subunit methyltransferase G (191 aa).

Residues glycine 62, phenylalanine 67, 111 to 112 (IE), and arginine 124 each bind S-adenosyl-L-methionine.

It belongs to the methyltransferase superfamily. RNA methyltransferase RsmG family.

Its subcellular location is the cytoplasm. The enzyme catalyses guanosine(527) in 16S rRNA + S-adenosyl-L-methionine = N(7)-methylguanosine(527) in 16S rRNA + S-adenosyl-L-homocysteine. Specifically methylates the N7 position of guanine in position 527 of 16S rRNA. The polypeptide is Ribosomal RNA small subunit methyltransferase G (Rickettsia akari (strain Hartford)).